The primary structure comprises 90 residues: Protein E18 (90 aa).

Residues proline 27–valine 47 form a helical membrane-spanning segment.

It is found in the virion membrane. Functionally, component of the polyhedra envelope. Plays an essential role in the budded virus production. The chain is Protein E18 (E18) from Autographa californica nuclear polyhedrosis virus (AcMNPV).